Consider the following 1193-residue polypeptide: Nucleolar protein 6 (1193 aa).

Disordered stretches follow at residues 1 to 69 (MRFV…TKNV) and 1137 to 1193 (KREQ…KVLK). 2 stretches are compositionally biased toward basic and acidic residues: residues 31 to 46 (AGDH…KIAK) and 1151 to 1161 (DANKAEEESKP). Phosphoserine is present on Ser35. Positions 1162–1184 (KPKKHRQRKGTGKKALPKRKRLI) are enriched in basic residues.

It belongs to the NRAP family. As to quaternary structure, part of the small subunit (SSU) processome, composed of more than 70 proteins and the RNA chaperone small nucleolar RNA (snoRNA) U3. As to expression, expressed in nurse cells at stages 9-10 of oogenesis and exported to the oocyte.

The protein resides in the nucleus. It localises to the nucleolus. It is found in the chromosome. Its function is as follows. Part of the small subunit (SSU) processome, first precursor of the small eukaryotic ribosomal subunit. During the assembly of the SSU processome in the nucleolus, many ribosome biogenesis factors, an RNA chaperone and ribosomal proteins associate with the nascent pre-rRNA and work in concert to generate RNA folding, modifications, rearrangements and cleavage as well as targeted degradation of pre-ribosomal RNA by the RNA exosome. This chain is Nucleolar protein 6, found in Drosophila melanogaster (Fruit fly).